The primary structure comprises 194 residues: Translation machinery-associated protein 22 (194 aa).

The region spanning 102–173 (VQIKRVERNK…DVQDWLLEVY (72 aa)) is the SUI1 domain.

The protein belongs to the DENR family. Interacts with the 40S ribosomal subunit.

The protein localises to the cytoplasm. The protein is Translation machinery-associated protein 22 (tma22) of Aspergillus oryzae (strain ATCC 42149 / RIB 40) (Yellow koji mold).